The sequence spans 287 residues: MRYAVLVTGPAGAGKSTFCASLITHAQTIGRSVHLVNLDPAADKFEYEPTIDIRDLINLEDVMEELEFGPNGGLIYCFEYLLNNLDWLEDELGAYEDDYLIIDCPGQIELYTHVPLLPRLATFLSTSLNFRTSAVYLIDSQFMQDKSKFFAGVMSAMSCMLSLGISMLCLMSKMDLVKDKKGRTKREVGRYLDPDPNLLLEDINQGTNSKFNQLNRAVVSLIEDQNIVSFLPLDVTSEDSVNTVLSHIDNMMQYGEDEEPKVPKDMDDGEFVAPPRSYNIKLIVRDR.

12 to 17 lines the GTP pocket; that stretch reads GAGKST. The Gly-Pro-Asn (GPN)-loop; involved in dimer interface signature appears at 69-71; sequence GPN. 172-175 contacts GTP; it reads SKMD.

It belongs to the GPN-loop GTPase family. In terms of assembly, heterodimers with GPN1 or GPN2. Binds to RNA polymerase II (RNAPII).

Functionally, small GTPase required for proper nuclear import of RNA polymerase II and III (RNAPII and RNAPIII). May act at an RNAP assembly step prior to nuclear import. In Cryptococcus neoformans var. neoformans serotype D (strain B-3501A) (Filobasidiella neoformans), this protein is GPN-loop GTPase 3.